A 343-amino-acid polypeptide reads, in one-letter code: L-threonine 3-dehydrogenase (343 aa).

Position 38 (cysteine 38) interacts with Zn(2+). Active-site charge relay system residues include threonine 40 and histidine 43. Positions 63, 64, 93, 96, 99, and 107 each coordinate Zn(2+). NAD(+)-binding positions include isoleucine 175, aspartate 195, arginine 200, 262–264 (LGI), and 286–287 (IY).

Belongs to the zinc-containing alcohol dehydrogenase family. As to quaternary structure, homotetramer. Zn(2+) serves as cofactor.

Its subcellular location is the cytoplasm. It catalyses the reaction L-threonine + NAD(+) = (2S)-2-amino-3-oxobutanoate + NADH + H(+). It participates in amino-acid degradation; L-threonine degradation via oxydo-reductase pathway; glycine from L-threonine: step 1/2. In terms of biological role, catalyzes the NAD(+)-dependent oxidation of L-threonine to 2-amino-3-ketobutyrate. This is L-threonine 3-dehydrogenase from Burkholderia thailandensis (strain ATCC 700388 / DSM 13276 / CCUG 48851 / CIP 106301 / E264).